Consider the following 301-residue polypeptide: Acetylglutamate kinase (301 aa).

Substrate is bound by residues 72–73 (GG), Arg94, and Asn199.

Belongs to the acetylglutamate kinase family. ArgB subfamily.

The protein resides in the cytoplasm. The enzyme catalyses N-acetyl-L-glutamate + ATP = N-acetyl-L-glutamyl 5-phosphate + ADP. Its pathway is amino-acid biosynthesis; L-arginine biosynthesis; N(2)-acetyl-L-ornithine from L-glutamate: step 2/4. Functionally, catalyzes the ATP-dependent phosphorylation of N-acetyl-L-glutamate. This is Acetylglutamate kinase from Bartonella quintana (strain Toulouse) (Rochalimaea quintana).